A 382-amino-acid chain; its full sequence is D-galactonate dehydratase (382 aa).

Asp183 serves as a coordination point for Mg(2+). The active-site Proton donor is His185. Glu209 and Glu235 together coordinate Mg(2+). His285 serves as the catalytic Proton acceptor.

Belongs to the mandelate racemase/muconate lactonizing enzyme family. GalD subfamily. Mg(2+) serves as cofactor.

The enzyme catalyses D-galactonate = 2-dehydro-3-deoxy-D-galactonate + H2O. Its pathway is carbohydrate acid metabolism; D-galactonate degradation; D-glyceraldehyde 3-phosphate and pyruvate from D-galactonate: step 1/3. Its function is as follows. Catalyzes the dehydration of D-galactonate to 2-keto-3-deoxy-D-galactonate. This chain is D-galactonate dehydratase, found in Verminephrobacter eiseniae (strain EF01-2).